We begin with the raw amino-acid sequence, 502 residues long: MVNQTHEFLLEMTGVSKEFPGVKALDKVNLKVRPHSVHALMGENGAGKSTLLKCLFGIYEKDEGDIIFLGQHVNFSSSKEALESGVSMVHQELNQVKQCSVMDNIWLGRYPTKGFFVDHDKMYRDTKAIFAELDIDIDPKVKVATLSVSQMQMLEIAKAFSYDAKVVIMDEPTSSLTEKEVNHLFTIIKKLKEKGCGVVYISHKMEEIFSICDEITILRDGQWVDTRPLKGLDMDKIISMMVGRELTQRFPEKSNEPKNVILEVKNLTALNQPSIQDISFELRAGEILGVAGLVGSRRTDIVETIFGVRERSAGHILLHGREMKNHDAHEAIRNGFALVTEERRSTGIYSNLDITFNSLVANVDEYKTPYGLLSDKKMKSDTQWVIDSMRVKTPSHQTHIGSLSGGNQQKVIIGRWLLTQPEILMLDEPTRGIDVGAKYEIYQLILELAKKDKGIIIISSEMPELLGITDRIMVMSNGRNAGIVNTKQTSQNEILELASRYL.

ABC transporter domains follow at residues 10–245 (LEMT…VGRE) and 255–502 (NEPK…SRYL). 42-49 (GENGAGKS) serves as a coordination point for ATP.

It belongs to the ABC transporter superfamily. Galactose/methyl galactoside importer (TC 3.A.1.2.3) family. The complex is composed of one ATP-binding protein (MglA), two transmembrane proteins (MglC) and a solute-binding protein (MglB).

It is found in the cell inner membrane. The catalysed reaction is D-galactose(out) + ATP + H2O = D-galactose(in) + ADP + phosphate + H(+). It carries out the reaction methyl beta-D-galactoside(out) + ATP + H2O = methyl beta-D-galactoside(in) + ADP + phosphate + H(+). In terms of biological role, part of the ABC transporter complex MglABC involved in galactose/methyl galactoside import. Responsible for energy coupling to the transport system. The protein is Galactose/methyl galactoside import ATP-binding protein MglA of Vibrio cholerae serotype O1 (strain ATCC 39315 / El Tor Inaba N16961).